Reading from the N-terminus, the 81-residue chain is Photosystem I iron-sulfur center (81 aa).

2 4Fe-4S ferredoxin-type domains span residues 2–31 (AHSV…MVPW) and 39–68 (IASA…VRVY). 8 residues coordinate [4Fe-4S] cluster: C11, C14, C17, C21, C48, C51, C54, and C58.

As to quaternary structure, the eukaryotic PSI reaction center is composed of at least 11 subunits. Requires [4Fe-4S] cluster as cofactor.

The protein localises to the plastid. The protein resides in the chloroplast thylakoid membrane. It catalyses the reaction reduced [plastocyanin] + hnu + oxidized [2Fe-2S]-[ferredoxin] = oxidized [plastocyanin] + reduced [2Fe-2S]-[ferredoxin]. Apoprotein for the two 4Fe-4S centers FA and FB of photosystem I (PSI); essential for photochemical activity. FB is the terminal electron acceptor of PSI, donating electrons to ferredoxin. The C-terminus interacts with PsaA/B/D and helps assemble the protein into the PSI complex. Required for binding of PsaD and PsaE to PSI. PSI is a plastocyanin-ferredoxin oxidoreductase, converting photonic excitation into a charge separation, which transfers an electron from the donor P700 chlorophyll pair to the spectroscopically characterized acceptors A0, A1, FX, FA and FB in turn. This Gnetum parvifolium (Small-leaved jointfir) protein is Photosystem I iron-sulfur center.